The following is a 554-amino-acid chain: Arginine--tRNA ligase (554 aa).

The short motif at 132-142 (ANPTGPIHLGG) is the 'HIGH' region element.

Belongs to the class-I aminoacyl-tRNA synthetase family. As to quaternary structure, monomer.

Its subcellular location is the cytoplasm. The catalysed reaction is tRNA(Arg) + L-arginine + ATP = L-arginyl-tRNA(Arg) + AMP + diphosphate. This chain is Arginine--tRNA ligase, found in Clavibacter sepedonicus (Clavibacter michiganensis subsp. sepedonicus).